We begin with the raw amino-acid sequence, 336 residues long: Probable tRNA N6-adenosine threonylcarbamoyltransferase (336 aa).

The a divalent metal cation site is built by H110, H114, and Y131. Substrate contacts are provided by residues 131-135 (YVSGG), D163, G178, E182, and N267. D295 contributes to the a divalent metal cation binding site.

This sequence belongs to the KAE1 / TsaD family. In terms of assembly, component of the EKC/KEOPS complex; the whole complex dimerizes. A divalent metal cation serves as cofactor.

It is found in the cytoplasm. It localises to the nucleus. The catalysed reaction is L-threonylcarbamoyladenylate + adenosine(37) in tRNA = N(6)-L-threonylcarbamoyladenosine(37) in tRNA + AMP + H(+). Component of the EKC/KEOPS complex that is required for the formation of a threonylcarbamoyl group on adenosine at position 37 (t(6)A37) in tRNAs that read codons beginning with adenine. The complex is probably involved in the transfer of the threonylcarbamoyl moiety of threonylcarbamoyl-AMP (TC-AMP) to the N6 group of A37. Osgep likely plays a direct catalytic role in this reaction, but requires other protein(s) of the complex to fulfill this activity. This chain is Probable tRNA N6-adenosine threonylcarbamoyltransferase, found in Dictyostelium discoideum (Social amoeba).